Reading from the N-terminus, the 362-residue chain is Anthranilate phosphoribosyltransferase (362 aa).

5-phospho-alpha-D-ribose 1-diphosphate is bound by residues Gly96, 99 to 100, Thr104, 106 to 109, 124 to 132, and Gly136; these read GD, NIST, and KHGNRAASS. Gly96 lines the anthranilate pocket. Residue Ser108 coordinates Mg(2+). Asn127 contributes to the anthranilate binding site. Arg182 is an anthranilate binding site. Mg(2+)-binding residues include Asp240 and Glu241.

The protein belongs to the anthranilate phosphoribosyltransferase family. In terms of assembly, homodimer. It depends on Mg(2+) as a cofactor.

It carries out the reaction N-(5-phospho-beta-D-ribosyl)anthranilate + diphosphate = 5-phospho-alpha-D-ribose 1-diphosphate + anthranilate. The protein operates within amino-acid biosynthesis; L-tryptophan biosynthesis; L-tryptophan from chorismate: step 2/5. Catalyzes the transfer of the phosphoribosyl group of 5-phosphorylribose-1-pyrophosphate (PRPP) to anthranilate to yield N-(5'-phosphoribosyl)-anthranilate (PRA). The chain is Anthranilate phosphoribosyltransferase from Rhodococcus opacus (strain B4).